A 1235-amino-acid chain; its full sequence is ATP-dependent helicase/nuclease subunit A (1235 aa).

Residues 3–471 (TKWTETQKSA…IKLSENFRSR (469 aa)) form the UvrD-like helicase ATP-binding domain. 24–31 (AGAGTGKT) contributes to the ATP binding site. In terms of domain architecture, UvrD-like helicase C-terminal spans 509-808 (PFEGNCGGDV…RIMSIHKSKG (300 aa)).

It belongs to the helicase family. AddA subfamily. Heterodimer of AddA and AddB/RexB. Mg(2+) is required as a cofactor.

It carries out the reaction Couples ATP hydrolysis with the unwinding of duplex DNA by translocating in the 3'-5' direction.. The enzyme catalyses ATP + H2O = ADP + phosphate + H(+). Functionally, the heterodimer acts as both an ATP-dependent DNA helicase and an ATP-dependent, dual-direction single-stranded exonuclease. Recognizes the chi site generating a DNA molecule suitable for the initiation of homologous recombination. The AddA nuclease domain is required for chi fragment generation; this subunit has the helicase and 3' -&gt; 5' nuclease activities. The sequence is that of ATP-dependent helicase/nuclease subunit A from Clostridium kluyveri (strain ATCC 8527 / DSM 555 / NBRC 12016 / NCIMB 10680 / K1).